The chain runs to 108 residues: Glutaredoxin-1 (108 aa).

Residues 3-106 (EEFVQQRLTN…DILSSIGVLR (104 aa)) form the Glutaredoxin domain. An intrachain disulfide couples Cys-23 to Cys-26.

It belongs to the glutaredoxin family.

Its subcellular location is the virion. Functionally, displays thioltransferase and dehydroascorbate reductase activities. The sequence is that of Glutaredoxin-1 (OPG075) from Variola virus (isolate Human/India/Ind3/1967) (VARV).